A 547-amino-acid chain; its full sequence is Sesquiterpene synthase TPS3 (547 aa).

Residues arginine 265, aspartate 302, aspartate 306, arginine 443, and aspartate 446 each contribute to the (2E,6E)-farnesyl diphosphate site. Residues aspartate 302 and aspartate 306 each contribute to the Mg(2+) site. Residues 302–306 carry the DDXXD motif motif; the sequence is DDIYD. Mg(2+) is bound by residues aspartate 446, threonine 450, and glutamate 454.

Belongs to the terpene synthase family. Tpsb subfamily. As to quaternary structure, monomer. Mg(2+) is required as a cofactor.

The protein localises to the cytoplasm. It carries out the reaction (2E,6E)-farnesyl diphosphate = (1S,5S,6R)-alpha-bergamotene + diphosphate. It participates in secondary metabolite biosynthesis; terpenoid biosynthesis. Sesquiterpene synthase involved in the biosynthesis of volatile organic compounds. Mediates the conversion of (2E,6E)-farnesyl diphosphate (FPP) into alpha-bergamotene. Does not use (2E)-geranyl diphosphate (GPP) as substrate. The protein is Sesquiterpene synthase TPS3 of Cananga odorata (Ylang-ylang tree).